We begin with the raw amino-acid sequence, 487 residues long: ATP synthase subunit beta (487 aa).

164–171 serves as a coordination point for ATP; that stretch reads GGAGVGKT.

It belongs to the ATPase alpha/beta chains family. In terms of assembly, F-type ATPases have 2 components, CF(1) - the catalytic core - and CF(0) - the membrane proton channel. CF(1) has five subunits: alpha(3), beta(3), gamma(1), delta(1), epsilon(1). CF(0) has four main subunits: a(1), b(1), b'(1) and c(9-12).

The protein localises to the cellular thylakoid membrane. It carries out the reaction ATP + H2O + 4 H(+)(in) = ADP + phosphate + 5 H(+)(out). Its function is as follows. Produces ATP from ADP in the presence of a proton gradient across the membrane. The catalytic sites are hosted primarily by the beta subunits. This is ATP synthase subunit beta from Synechococcus sp. (strain CC9605).